We begin with the raw amino-acid sequence, 526 residues long: Bifunctional purine biosynthesis protein PurH (526 aa).

The MGS-like domain occupies 1–145; the sequence is MSKAPLALLS…KNHAHVGIVT (145 aa).

It belongs to the PurH family.

The enzyme catalyses (6R)-10-formyltetrahydrofolate + 5-amino-1-(5-phospho-beta-D-ribosyl)imidazole-4-carboxamide = 5-formamido-1-(5-phospho-D-ribosyl)imidazole-4-carboxamide + (6S)-5,6,7,8-tetrahydrofolate. It catalyses the reaction IMP + H2O = 5-formamido-1-(5-phospho-D-ribosyl)imidazole-4-carboxamide. It participates in purine metabolism; IMP biosynthesis via de novo pathway; 5-formamido-1-(5-phospho-D-ribosyl)imidazole-4-carboxamide from 5-amino-1-(5-phospho-D-ribosyl)imidazole-4-carboxamide (10-formyl THF route): step 1/1. Its pathway is purine metabolism; IMP biosynthesis via de novo pathway; IMP from 5-formamido-1-(5-phospho-D-ribosyl)imidazole-4-carboxamide: step 1/1. This Psychrobacter arcticus (strain DSM 17307 / VKM B-2377 / 273-4) protein is Bifunctional purine biosynthesis protein PurH.